The sequence spans 615 residues: Dihydroxy-acid dehydratase (615 aa).

A Mg(2+)-binding site is contributed by Asp-81. A [2Fe-2S] cluster-binding site is contributed by Cys-122. The Mg(2+) site is built by Asp-123 and Lys-124. At Lys-124 the chain carries N6-carboxylysine. Cys-195 serves as a coordination point for [2Fe-2S] cluster. Glu-491 lines the Mg(2+) pocket. Catalysis depends on Ser-517, which acts as the Proton acceptor.

It belongs to the IlvD/Edd family. In terms of assembly, homodimer. [2Fe-2S] cluster serves as cofactor. Mg(2+) is required as a cofactor.

It catalyses the reaction (2R)-2,3-dihydroxy-3-methylbutanoate = 3-methyl-2-oxobutanoate + H2O. It carries out the reaction (2R,3R)-2,3-dihydroxy-3-methylpentanoate = (S)-3-methyl-2-oxopentanoate + H2O. Its pathway is amino-acid biosynthesis; L-isoleucine biosynthesis; L-isoleucine from 2-oxobutanoate: step 3/4. It functions in the pathway amino-acid biosynthesis; L-valine biosynthesis; L-valine from pyruvate: step 3/4. Functions in the biosynthesis of branched-chain amino acids. Catalyzes the dehydration of (2R,3R)-2,3-dihydroxy-3-methylpentanoate (2,3-dihydroxy-3-methylvalerate) into 2-oxo-3-methylpentanoate (2-oxo-3-methylvalerate) and of (2R)-2,3-dihydroxy-3-methylbutanoate (2,3-dihydroxyisovalerate) into 2-oxo-3-methylbutanoate (2-oxoisovalerate), the penultimate precursor to L-isoleucine and L-valine, respectively. The polypeptide is Dihydroxy-acid dehydratase (Shewanella piezotolerans (strain WP3 / JCM 13877)).